The chain runs to 218 residues: Pyridoxine/pyridoxamine 5'-phosphate oxidase (218 aa).

Residues 11-14 and Lys-75 contribute to the substrate site; that span reads RVEY. Residues 70–75, 85–86, Lys-92, and Gln-114 each bind FMN; these read RTVLCK and YT. Residues Tyr-132, Arg-136, and Ser-140 each coordinate substrate. Residues 149–150 and Trp-195 contribute to the FMN site; that span reads QS. 201-203 contributes to the substrate binding site; that stretch reads RVH. Position 205 (Arg-205) interacts with FMN.

It belongs to the pyridoxamine 5'-phosphate oxidase family. Homodimer. FMN serves as cofactor.

It catalyses the reaction pyridoxamine 5'-phosphate + O2 + H2O = pyridoxal 5'-phosphate + H2O2 + NH4(+). The enzyme catalyses pyridoxine 5'-phosphate + O2 = pyridoxal 5'-phosphate + H2O2. It functions in the pathway cofactor metabolism; pyridoxal 5'-phosphate salvage; pyridoxal 5'-phosphate from pyridoxamine 5'-phosphate: step 1/1. The protein operates within cofactor metabolism; pyridoxal 5'-phosphate salvage; pyridoxal 5'-phosphate from pyridoxine 5'-phosphate: step 1/1. Catalyzes the oxidation of either pyridoxine 5'-phosphate (PNP) or pyridoxamine 5'-phosphate (PMP) into pyridoxal 5'-phosphate (PLP). The protein is Pyridoxine/pyridoxamine 5'-phosphate oxidase of Mycolicibacterium gilvum (strain PYR-GCK) (Mycobacterium gilvum (strain PYR-GCK)).